The following is a 487-amino-acid chain: Cysteine--tRNA ligase (487 aa).

Cys29 provides a ligand contact to Zn(2+). Residues 31–41 (VTVYDVNHVGH) carry the 'HIGH' region motif. The Zn(2+) site is built by Cys209, His234, and Glu238. The 'KMSKS' region signature appears at 266–270 (KMSKS). Residue Lys269 coordinates ATP.

The protein belongs to the class-I aminoacyl-tRNA synthetase family. As to quaternary structure, monomer. It depends on Zn(2+) as a cofactor.

It is found in the cytoplasm. The catalysed reaction is tRNA(Cys) + L-cysteine + ATP = L-cysteinyl-tRNA(Cys) + AMP + diphosphate. The polypeptide is Cysteine--tRNA ligase (Persephonella marina (strain DSM 14350 / EX-H1)).